Here is a 237-residue protein sequence, read N- to C-terminus: Oligoribonuclease, mitochondrial (237 aa).

Residues M1 to G25 constitute a mitochondrion transit peptide. An Exonuclease domain is found at M43–L207. 2 residues coordinate Mg(2+): D47 and E49. A Phosphoserine modification is found at S92. At Y122 the chain carries Phosphotyrosine. D147 is a binding site for Mg(2+). K173 carries the post-translational modification N6-acetyllysine. H194 is an active-site residue. Mg(2+) is bound at residue D199.

It belongs to the oligoribonuclease family. Homodimer. Homotetramer. Requires Mn(2+) as cofactor. Mg(2+) is required as a cofactor.

It localises to the mitochondrion intermembrane space. The protein localises to the mitochondrion matrix. Its subcellular location is the mitochondrion. It is found in the cytoplasm. The protein resides in the nucleus. Functionally, 3'-to-5'exoribonuclease that preferentially degrades DNA and RNA oligonucleotides composed of only two nucleotides. Binds and degrades longer oligonucleotides with a lower affinity. Plays dual roles in mitochondria, scavenging nanoRNAs (small RNA oligonucleotides of &lt;5 nucleotides) that are produced by the degradosome and clearing short RNAs that are generated by RNA processing. Essential for correct initiation of mitochondrial transcription, degrading mitochondrial RNA dinucleotides to prevent RNA-primed transcription at non-canonical sites in the mitochondrial genome. Essential for embryonic development. This Mus musculus (Mouse) protein is Oligoribonuclease, mitochondrial (Rexo2).